The primary structure comprises 468 residues: Uronate isomerase (468 aa).

Belongs to the metallo-dependent hydrolases superfamily. Uronate isomerase family.

The catalysed reaction is D-glucuronate = D-fructuronate. It catalyses the reaction aldehydo-D-galacturonate = keto-D-tagaturonate. The protein operates within carbohydrate metabolism; pentose and glucuronate interconversion. This chain is Uronate isomerase, found in Lachnospira eligens (strain ATCC 27750 / DSM 3376 / VPI C15-48 / C15-B4) (Eubacterium eligens).